A 68-amino-acid chain; its full sequence is Putative alpha-conotoxin Qc alphaL-1 (68 aa).

Positions methionine 1–serine 21 are cleaved as a signal peptide. Residues isoleucine 22–arginine 49 constitute a propeptide that is removed on maturation. Cysteine 51 and cysteine 64 are disulfide-bonded.

Belongs to the conotoxin A superfamily. As to expression, expressed by the venom duct.

It is found in the secreted. Functionally, alpha-conotoxins act on postsynaptic membranes, they bind to the nicotinic acetylcholine receptors (nAChR) and thus inhibit them. The sequence is that of Putative alpha-conotoxin Qc alphaL-1 from Conus quercinus (Oak cone).